Reading from the N-terminus, the 102-residue chain is NADH-quinone oxidoreductase subunit K (102 aa).

3 consecutive transmembrane segments (helical) span residues 5-25, 31-51, and 66-86; these read ITHYLTVSALMFTIGIAGIFL, IIILMSIELILLSVNINFVAF, and FVLTVAAAEAAIGLAILVVFF.

The protein belongs to the complex I subunit 4L family. As to quaternary structure, NDH-1 is composed of 14 different subunits. Subunits NuoA, H, J, K, L, M, N constitute the membrane sector of the complex.

Its subcellular location is the cell inner membrane. The catalysed reaction is a quinone + NADH + 5 H(+)(in) = a quinol + NAD(+) + 4 H(+)(out). Its function is as follows. NDH-1 shuttles electrons from NADH, via FMN and iron-sulfur (Fe-S) centers, to quinones in the respiratory chain. The immediate electron acceptor for the enzyme in this species is believed to be ubiquinone. Couples the redox reaction to proton translocation (for every two electrons transferred, four hydrogen ions are translocated across the cytoplasmic membrane), and thus conserves the redox energy in a proton gradient. This Bartonella tribocorum (strain CIP 105476 / IBS 506) protein is NADH-quinone oxidoreductase subunit K.